Reading from the N-terminus, the 116-residue chain is Putative pterin-4-alpha-carbinolamine dehydratase (116 aa).

It belongs to the pterin-4-alpha-carbinolamine dehydratase family.

The enzyme catalyses (4aS,6R)-4a-hydroxy-L-erythro-5,6,7,8-tetrahydrobiopterin = (6R)-L-erythro-6,7-dihydrobiopterin + H2O. The polypeptide is Putative pterin-4-alpha-carbinolamine dehydratase (Stenotrophomonas maltophilia (strain R551-3)).